The chain runs to 414 residues: 3-oxo-isoapionate-4-phosphate transcarboxylase/hydrolase (414 aa).

3 residues coordinate Mg(2+): K180, D182, and E183. Position 180 is an N6-carboxylysine (K180).

It belongs to the RuBisCO large chain family. Mg(2+) is required as a cofactor.

It catalyses the reaction 3-oxoisoapionate 4-phosphate + H2O = (2R)-3-phosphoglycerate + glycolate + H(+). Its pathway is carbohydrate metabolism. Involved in catabolism of D-apiose. Catalyzes the conversion of 3-oxo-isoapionate 4-phosphate to 3-phosphoglycerate and glycolate. This Xanthobacter autotrophicus (strain ATCC BAA-1158 / Py2) protein is 3-oxo-isoapionate-4-phosphate transcarboxylase/hydrolase.